An 89-amino-acid chain; its full sequence is Elongation factor 1-beta (89 aa).

The protein belongs to the EF-1-beta/EF-1-delta family.

Promotes the exchange of GDP for GTP in EF-1-alpha/GDP, thus allowing the regeneration of EF-1-alpha/GTP that could then be used to form the ternary complex EF-1-alpha/GTP/AAtRNA. The polypeptide is Elongation factor 1-beta (Methanococcus maripaludis (strain C5 / ATCC BAA-1333)).